A 138-amino-acid polypeptide reads, in one-letter code: uncharacterized protein (138 aa).

35–42 (DFIGSFYN) provides a ligand contact to ATP.

This is an uncharacterized protein from Acanthamoeba polyphaga mimivirus (APMV).